A 693-amino-acid polypeptide reads, in one-letter code: MSTPFGLDLGNNNSVLAVARNRGIDIVVNEVSNRSTPSVVGFGPKNRYLGETGKNKQTSNIKNTVANLKRIIGLDYHHPDFEQESKHFTSKLVELDDKKTGAEVRFAGEKHVFSATQLAAMFIDKVKDTVKQDTKANITDVCIAVPPWYTEEQRYNIADAARIAGLNPVRIVNDVTAAGVSYGIFKTDLPEGEEKPRIVAFVDIGHSSYTCSIMAFKKGQLKVLGTACDKHFGGRDFDLAITEHFADEFKTKYKIDIRENPKAYNRILTAAEKLKKVLSANTNAPFSVESVMNDVDVSSQLSREELEELVKPLLERVTEPVTKALAQAKLSAEEVDFVEIIGGTTRIPTLKQSISEAFGKPLSTTLNQDEAIAKGAAFICAIHSPTLRVRPFKFEDIHPYSVSYSWDKQVEDEDHMEVFPAGSSFPSTKLITLNRTGDFSMAASYTDITQLPPNTPEQIANWEITGVQLPEGQDSVPVKLKLRCDPSGLHTIEEAYTIEDIEVEEPIPLPEDAPEDAEQEFKKVTKTVKKDDLTIVAHTFGLDAKKLNELIEKENEMLAQDKLVAETEDRKNTLEEYIYTLRGKLEEEYAPFASDAEKTKLQGMLNKAEEWLYDEGFDSIKAKYIAKYEELASLGNIIRGRYLAKEEEKKQAIRSKQEASQMAAMAEKLAAQRKAEAEKKEEKKDTEGDVDMD.

Ser-2 is modified (N-acetylserine). A Glycyl lysine isopeptide (Lys-Gly) (interchain with G-Cter in ubiquitin) cross-link involves residue Lys-195. The residue at position 242 (Thr-242) is a Phosphothreonine. The interval 653–693 (IRSKQEASQMAAMAEKLAAQRKAEAEKKEEKKDTEGDVDMD) is disordered. The residue at position 660 (Ser-660) is a Phosphoserine. Residues 673–687 (RKAEAEKKEEKKDTE) are compositionally biased toward basic and acidic residues.

The protein belongs to the heat shock protein 70 family.

It is found in the cytoplasm. Functionally, has a calcium-dependent calmodulin-binding activity. Required for normal growth at various temperatures. This is Heat shock protein homolog SSE1 (SSE1) from Saccharomyces cerevisiae (strain ATCC 204508 / S288c) (Baker's yeast).